The sequence spans 509 residues: Heat shock 70 kDa protein 14 (509 aa).

This sequence belongs to the heat shock protein 70 family. In terms of assembly, component of ribosome-associated complex (RAC), a heterodimer composed of Hsp70/DnaK-type chaperone HSPA14 and Hsp40/DnaJ-type chaperone DNAJC2.

Its subcellular location is the cytoplasm. It is found in the cytosol. Its function is as follows. Component of the ribosome-associated complex (RAC), a complex involved in folding or maintaining nascent polypeptides in a folding-competent state. In the RAC complex, binds to the nascent polypeptide chain, while DNAJC2 stimulates its ATPase activity. The protein is Heat shock 70 kDa protein 14 (HSPA14) of Bos taurus (Bovine).